The primary structure comprises 276 residues: Rhomboid protease GlpG (276 aa).

6 helical membrane-spanning segments follow: residues 94-114 (GPVT…MQIL), 142-162 (ALMH…WYLG), 169-189 (LGSG…GYVQ), 192-212 (FSGP…GYVW), 229-249 (LIIF…GMSM), and 250-270 (ANGA…VDSL). The active-site Nucleophile is the Ser201. Residue His254 is part of the active site.

The protein belongs to the peptidase S54 family.

The protein resides in the cell inner membrane. It carries out the reaction Cleaves type-1 transmembrane domains using a catalytic dyad composed of serine and histidine that are contributed by different transmembrane domains.. In terms of biological role, rhomboid-type serine protease that catalyzes intramembrane proteolysis. This chain is Rhomboid protease GlpG, found in Shigella flexneri serotype 5b (strain 8401).